Reading from the N-terminus, the 411-residue chain is RING-H2 finger protein ATL65 (411 aa).

The tract at residues 1–32 (MRFVAPPPRSGDNSPSPSPSSGISEEILSRSS) is disordered. Low complexity predominate over residues 10–21 (SGDNSPSPSPSS). Residues 36–56 (LEFSPPLIAMVVVLAAAFLFV) form a helical membrane-spanning segment. The RING-type; atypical zinc-finger motif lies at 156 to 198 (CAVCLLEFEEGDYVRTLPLCFHAFHLECIDEWLRSHPNCPLCR).

The protein belongs to the RING-type zinc finger family. ATL subfamily.

The protein localises to the membrane. It catalyses the reaction S-ubiquitinyl-[E2 ubiquitin-conjugating enzyme]-L-cysteine + [acceptor protein]-L-lysine = [E2 ubiquitin-conjugating enzyme]-L-cysteine + N(6)-ubiquitinyl-[acceptor protein]-L-lysine.. Its pathway is protein modification; protein ubiquitination. The sequence is that of RING-H2 finger protein ATL65 (ATL65) from Arabidopsis thaliana (Mouse-ear cress).